Reading from the N-terminus, the 290-residue chain is ATP synthase gamma chain (290 aa).

It belongs to the ATPase gamma chain family. F-type ATPases have 2 components, CF(1) - the catalytic core - and CF(0) - the membrane proton channel. CF(1) has five subunits: alpha(3), beta(3), gamma(1), delta(1), epsilon(1). CF(0) has three main subunits: a, b and c.

It is found in the cell inner membrane. Functionally, produces ATP from ADP in the presence of a proton gradient across the membrane. The gamma chain is believed to be important in regulating ATPase activity and the flow of protons through the CF(0) complex. The sequence is that of ATP synthase gamma chain from Dictyoglomus turgidum (strain DSM 6724 / Z-1310).